Here is a 1164-residue protein sequence, read N- to C-terminus: Nuclear exosome regulator NRDE2 (1164 aa).

2 disordered regions span residues 1-25 (MALFPAFAGLSEAPDGGSSRKELDW) and 39-149 (LSQQ…GHRF). An N-acetylalanine modification is found at Ala-2. Over residues 61-73 (LKSESSDESDTNK) the composition is skewed to basic and acidic residues. Residues 61–383 (LKSESSDESD…IESNQSSVDL (323 aa)) adopt a coiled-coil conformation. Over residues 74–103 (KLKQTSRKKKKEKKKKRKHQHHKKTKRKHG) the composition is skewed to basic residues. Over residues 110–133 (SETDTDSEKDKPSRGVGGSKKESE) the composition is skewed to basic and acidic residues. Residues 163 to 266 (FRTDKKPDPA…KDLEDAAPVT (104 aa)) are MID/MTR4-interacting domain. Positions 279-305 (TTHWLQGQGPPEQESKQPDAQPDSESA) are disordered. 5 HAT repeats span residues 305–337 (AALKAKVEEFNRRVRENPRDTQLWMAFVAFQDE), 395–427 (WEPSTLVKEWQKLIFLHPNNTALWQKYLLFCQS), 758–792 (SQGKNCKKLAKNLLKEPENCNNFCLWKQYAHLEWL), 978–1010 (YPLAPLREALSQALKLYPGNQVLWRSYVQIQNK), and 1067–1101 (GLMHRIQALFENAMRSDSGSQCPLLWRMYLNFLVS).

The protein belongs to the NRDE2 family. As to quaternary structure, interacts with MTREX; the interaction is direct and stabilizes NRDE2. Interacts with EXOSC10, EFTUD2 and EIF4A3.

The protein localises to the nucleus speckle. It is found in the nucleus. It localises to the nucleolus. The protein resides in the nucleoplasm. Functionally, protein of the nuclear speckles that regulates RNA degradation and export from the nucleus through its interaction with MTREX an essential factor directing various RNAs to exosomal degradation. Changes the conformation of MTREX, precluding its association with the nuclear exosome and interaction with proteins required for its function in RNA exosomal degradation. Negatively regulates, for instance, the degradation of mRNAs and lncRNAs by inhibiting their MTREX-mediated recruitment to nuclear exosome. By preventing the degradation of RNAs in the nucleus, it promotes their export to the cytoplasm. U5 snRNP-associated RNA splicing factor which is required for efficient splicing of CEP131 pre-mRNA and plays an important role in centrosome maturation, integrity and function during mitosis. Suppresses intron retention in a subset of pre-mRNAs containing short, GC-rich introns with relatively weak 5' and 3' splice sites. Plays a role in DNA damage response. The sequence is that of Nuclear exosome regulator NRDE2 from Homo sapiens (Human).